A 480-amino-acid chain; its full sequence is ATP-grasp enzyme ankG (480 aa).

Residues 1-30 form a disordered region; that stretch reads MYQISLKATKSAAEPTSSTDASHDDRQVER. Residues 21-30 are compositionally biased toward basic and acidic residues; it reads ASHDDRQVER.

The catalysed reaction is NK13650 D + L-aspartate + ATP = NK13650 C + AMP + diphosphate + H(+). It catalyses the reaction NK13650 B + L-aspartate + ATP = NK13650 A + AMP + diphosphate + H(+). It participates in secondary metabolite biosynthesis. Functionally, ATP-grasp enzyme; part of the ank cluster that mediates the biosynthesis of NK13650 C, a highly modified cyclo-arginine-tyrosine dipeptide. AnkG catalyzes the last step of the pathway via amidation NK13650 D with L-Asp to produce NK13650 C. AnkG also amidates NK13650 B into NK13650 A. Within the pathway, the cyclodipeptide synthase ankA acts as the scaffold-generating enzyme and is responsible for formation of the cyclo-Arg-Tyr diketopiperazine (cRY) from L-Arg and L-Tyr. The ankA product cRY is desaturated by the cytochrome P450 monooxygenase ankB to yield a dehydro-cyclodipeptide intermediate. The FAD-dependent monooxygenase ankC then installs the m-OH, ankD catalyzes the attachment of L-homoserine, and ankE ligates citrate to the ankD product to yield NK13650 B. The O-methyltransferase ankF is responsible for methylation of the C-17 phenol group of NK13650 B to produce NK13650 D. Amidation of NK13650 D with L-Asp by ankG then leads to the production of NK13650 C, whereas amidation of NK13650 B produces NK13650 A. The sequence is that of ATP-grasp enzyme ankG from Aspergillus thermomutatus (Neosartorya pseudofischeri).